The chain runs to 130 residues: Arsenate reductase 2.2 (130 aa).

A Rhodanese domain is found at 18-119 (RDPRIAVVDV…WELSGRPVCR (102 aa)). The Cysteine persulfide intermediate role is filled by C70.

It catalyses the reaction [glutaredoxin]-dithiol + arsenate + glutathione + H(+) = glutathionyl-S-S-[glutaredoxin] + arsenite + H2O. In terms of biological role, possesses arsenate reductase activity in vitro. Catalyzes the reduction of arsenate [As(V)] to arsenite [As(III)]. May play a role in arsenic retention in roots. Functionally, possesses phosphatase activity towards p-nitrophenyl phosphate in vitro. The sequence is that of Arsenate reductase 2.2 (ACR2.2) from Oryza sativa subsp. japonica (Rice).